A 970-amino-acid polypeptide reads, in one-letter code: Anaphase-promoting complex subunit 3 (970 aa).

4 TPR repeats span residues 35 to 68, 74 to 107, 142 to 175, and 185 to 218; these read EDNL…TMIK, ALSN…NNNN, NNNS…NSIS, and GSVY…YPFL. The tract at residues 106–149 is disordered; sequence NNNNNNNNNNNNNNNNNNNNNNNKDKCNNSNKNNDSNNNSNSNN. The segment at 274–300 is disordered; sequence KVNNNNNNNNNNNNNINNNNSSNKNNE. 2 TPR repeats span residues 319-353 and 361-394; these read IKPN…TPIN and TNQQ…TPQT. Disordered regions lie at residues 358 to 379, 414 to 525, and 556 to 582; these read IQQT…PSQQ, PIPM…TTTT, and SSLS…HNKS. Residues 359–379 show a composition bias toward low complexity; it reads QQTNQQQQQQQQQQPQQPSQQ. Residues 424 to 443 are compositionally biased toward polar residues; sequence SKGSQHPPSSNSQTPYTPST. Basic residues predominate over residues 446–460; that stretch reads VHHHQKQQPHQHKKS. The span at 500–525 shows a compositional bias: low complexity; the sequence is TSSTSKQQQQQQQTKQQTTTTTTTTT. 9 TPR repeats span residues 546 to 580, 636 to 671, 672 to 705, 740 to 773, 775 to 807, 808 to 841, 843 to 876, 878 to 910, and 911 to 944; these read TEEF…HHHN, LELF…QYRT, GWVL…EPYR, PYSW…DPDM, YAYT…DPRH, YNAF…NESS, VLCC…QPKN, FAKF…EPKE, and TPIY…DPKN. The segment covering 570–580 has biased composition (basic residues); that stretch reads YQQHHHLHHHN.

The protein belongs to the APC3/CDC27 family. As to quaternary structure, the APC/C is composed of at least 13 subunits that stay tightly associated throughout the cell cycle: anapc1, anapc2, anapc3, anapc4, anapc5, anapc6, anapc7, anapc8, anapc10, anapc11, cdc20, cdc26 and cdh1.

It is found in the nucleus. The protein operates within protein modification; protein ubiquitination. Component of the anaphase promoting complex/cyclosome (APC/C), a cell cycle-regulated E3 ubiquitin-protein ligase complex that controls progression through mitosis and the G1 phase of the cell cycle. This is Anaphase-promoting complex subunit 3 (anapc3) from Dictyostelium discoideum (Social amoeba).